We begin with the raw amino-acid sequence, 221 residues long: High frequency lysogenization protein HflD homolog (221 aa).

It belongs to the HflD family.

It localises to the cytoplasm. It is found in the cell inner membrane. This Acidithiobacillus ferrooxidans (strain ATCC 23270 / DSM 14882 / CIP 104768 / NCIMB 8455) (Ferrobacillus ferrooxidans (strain ATCC 23270)) protein is High frequency lysogenization protein HflD homolog.